The chain runs to 223 residues: Endonuclease NucS (223 aa).

Belongs to the NucS endonuclease family.

The protein localises to the cytoplasm. Functionally, cleaves both 3' and 5' ssDNA extremities of branched DNA structures. This chain is Endonuclease NucS, found in Mycolicibacterium gilvum (strain PYR-GCK) (Mycobacterium gilvum (strain PYR-GCK)).